We begin with the raw amino-acid sequence, 389 residues long: Large envelope protein (389 aa).

An N-acetylmethionine modification is found at M1. G2 carries the N-myristoyl glycine; by host lipid modification. A pre-S1 region spans residues 2 to 108 (GTNLSVPNPL…PPLRDTHPQA (107 aa)). The interval 2 to 163 (GTNLSVPNPL…LSTTGDPVPN (162 aa)) is pre-S. The Virion surface; in external conformation portion of the chain corresponds to 2–170 (GTNLSVPNPL…VPNMENIASG (169 aa)). The Intravirion; in internal conformation portion of the chain corresponds to 2-242 (GTNLSVPNPL…PGYRWMCLRR (241 aa)). The tract at residues 109 to 163 (MQWNSTTFHQTLQDPRVRALYFPAGGSSSGTVNPVQNTASSISSILSTTGDPVPN) is pre-S2. A helical transmembrane segment spans residues 171–191 (LLGPLLVLQAGFFSLTKILTI). The Intravirion; in external conformation portion of the chain corresponds to 192–242 (PLSLDSWWTSLNFLGETPVCLGQNSQSQISSHSPTCCPPICPGYRWMCLRR). The helical transmembrane segment at 243-263 (FIIFLCILLLCLIFLLVLLDY) threads the bilayer. Topologically, residues 264 to 337 (QGMLPVCPLI…WASVRFSWLS (74 aa)) are virion surface. The N-linked (GlcNAc...) asparagine; by host glycan is linked to N309. The helical transmembrane segment at 338–358 (LLVPFVQWFVGLSPTVWLSVI) threads the bilayer. Over 359-364 (WMMWFW) the chain is Intravirion. Residues 365 to 387 (GPSLYNILSPFMPLLPIFFCLWV) traverse the membrane as a helical segment. At 388-389 (YI) the chain is on the virion surface side.

It belongs to the orthohepadnavirus major surface antigen family. As to quaternary structure, interacts (via its myristoylated pre-S1 region) with the host SLC10A1/NTCP; this interaction is essential for viral entry. In terms of assembly, in its internal form (Li-HBsAg), interacts with the capsid protein and with the isoform S. Interacts with host chaperone CANX. Associates with host chaperone CANX through its pre-S2 N glycan; this association may be essential for isoform M proper secretion. As to quaternary structure, interacts with isoform L. Interacts with the antigens of satellite virus HDV (HDVAgs); this interaction is required for encapsidation of HDV genomic RNA. Isoform M is N-terminally acetylated by host at a ratio of 90%, and N-glycosylated by host at the pre-S2 region. In terms of processing, myristoylated; this modification is essential for its interaction with the host protein SLC10A1/NTCP.

Its subcellular location is the virion membrane. In terms of biological role, the large envelope protein exists in two topological conformations, one which is termed 'external' or Le-HBsAg and the other 'internal' or Li-HBsAg. In its external conformation the protein attaches the virus to cell receptors and thereby initiating infection. This interaction determines the species specificity and liver tropism. This attachment induces virion internalization predominantly through caveolin-mediated endocytosis. The large envelope protein also assures fusion between virion membrane and endosomal membrane. In its internal conformation the protein plays a role in virion morphogenesis and mediates the contact with the nucleocapsid like a matrix protein. The middle envelope protein plays an important role in the budding of the virion. It is involved in the induction of budding in a nucleocapsid independent way. In this process the majority of envelope proteins bud to form subviral lipoprotein particles of 22 nm of diameter that do not contain a nucleocapsid. This chain is Large envelope protein, found in Hepatitis B virus genotype B2 (isolate Indonesia/pIDW420/1988) (HBV-B).